Consider the following 698-residue polypeptide: Voltage-dependent calcium channel beta subunit-associated regulatory protein (698 aa).

Residues 1-41 (MQPTATMATAAATTATVALTTSWDNATSRPTAEPDPILDNY) are Extracellular-facing. Asn25 carries N-linked (GlcNAc...) asparagine glycosylation. The chain crosses the membrane as a helical; Signal-anchor for type III membrane protein span at residues 42 to 62 (VLLVVVMSLFVGGTLVVLSGV). Over 63–698 (LLLCKRCWEV…APTSPDHSPA (636 aa)) the chain is Cytoplasmic. 2 disordered regions span residues 90–124 (YLDNGTHPIQDPDCRGEDPEGQDTETERFLATSST) and 185–275 (ASAA…SSGS). Low complexity predominate over residues 185–197 (ASAAATPHPATTS). Residues Ser290 and Ser295 each carry the phosphoserine modification. Disordered stretches follow at residues 308–339 (SQRASSLDTRGSPKRHHFQRQRAASESMEQEG), 360–421 (PPPR…HAQC), 438–536 (ATAS…RRDY), and 554–648 (PHFD…GSGL). The span at 360 to 375 (PPPRPFLASPTSPPPT) shows a compositional bias: pro residues. Positions 402–413 (PEHAQQQDPQQE) are enriched in low complexity. A compositionally biased stretch (gly residues) spans 459 to 468 (SGSGSGGGGA). Over residues 471-482 (AFPPPPESPPAL) the composition is skewed to pro residues. Residues 483-493 (RPKDGEARRLL) show a composition bias toward basic and acidic residues. Residues Ser501, Ser520, and Ser524 each carry the phosphoserine modification. Residues 562–576 (HRTRAHPHTHARKQW) show a composition bias toward basic residues. A Phosphoserine modification is found at Ser610. Residue Thr691 is modified to Phosphothreonine. A phosphoserine mark is found at Ser692 and Ser696.

Interacts with voltage-dependent calcium channels CACNB1, CACNB2, CACNB3 and CACNB4 beta subunits; prevents their interaction with the CACNA1C alpha subunit thereby negatively regulating the activity of the corresponding calcium channels. In terms of tissue distribution, expressed by neurons in the cortex, cerebellum and hippocampus and by pancreatic beta cells (at protein level).

Its subcellular location is the cytoplasmic vesicle. The protein resides in the secretory vesicle. The protein localises to the synaptic vesicle membrane. It localises to the cell membrane. It is found in the cell projection. Its subcellular location is the growth cone. Negatively regulates voltage-gated calcium channels by preventing the interaction between their alpha and beta subunits. Thereby, negatively regulates calcium channels activity at the plasma membrane and indirectly inhibits calcium-regulated exocytosis. This chain is Voltage-dependent calcium channel beta subunit-associated regulatory protein, found in Mus musculus (Mouse).